Here is a 444-residue protein sequence, read N- to C-terminus: Adenylyltransferase and sulfurtransferase UBA4 (444 aa).

Residues Gly-81, Asp-102, 109 to 113, Lys-126, and 170 to 171 each bind ATP; these read SNLHR and DT. Residues Cys-212 and Cys-215 each coordinate Zn(2+). Cys-229 serves as the catalytic Glycyl thioester intermediate; for adenylyltransferase activity. Zn(2+)-binding residues include Cys-290 and Cys-293. Residues 343–442 form the Rhodanese domain; sequence KTKPYVLLDV…YIDEINPSLP (100 aa). Cys-401 functions as the Cysteine persulfide intermediate; for sulfurtransferase activity in the catalytic mechanism.

This sequence in the N-terminal section; belongs to the HesA/MoeB/ThiF family. UBA4 subfamily. Zn(2+) serves as cofactor.

The protein resides in the cytoplasm. It is found in the cytosol. It functions in the pathway tRNA modification; 5-methoxycarbonylmethyl-2-thiouridine-tRNA biosynthesis. Plays a central role in 2-thiolation of mcm(5)S(2)U at tRNA wobble positions of cytosolic tRNA(Lys), tRNA(Glu) and tRNA(Gln). Acts by mediating the C-terminal thiocarboxylation of sulfur carrier URM1. Its N-terminus first activates URM1 as acyl-adenylate (-COAMP), then the persulfide sulfur on the catalytic cysteine is transferred to URM1 to form thiocarboxylation (-COSH) of its C-terminus. The reaction probably involves hydrogen sulfide that is generated from the persulfide intermediate and that acts as a nucleophile towards URM1. Subsequently, a transient disulfide bond is formed. Does not use thiosulfate as sulfur donor; NFS1 probably acting as a sulfur donor for thiocarboxylation reactions. Prior mcm(5) tRNA modification by the elongator complex is required for 2-thiolation. May also be involved in protein urmylation. This Kluyveromyces lactis (strain ATCC 8585 / CBS 2359 / DSM 70799 / NBRC 1267 / NRRL Y-1140 / WM37) (Yeast) protein is Adenylyltransferase and sulfurtransferase UBA4.